A 205-amino-acid polypeptide reads, in one-letter code: CASP-like protein 2A1 (205 aa).

A disordered region spans residues 1 to 25; sequence MDKSKVSTAVGGETPVGLITGSRDD. The Cytoplasmic portion of the chain corresponds to 1–34; sequence MDKSKVSTAVGGETPVGLITGSRDDELESGSMRT. A helical membrane pass occupies residues 35–55; that stretch reads AETVLRLVPMAFCISALVLML. At 56–76 the chain is on the extracellular side; it reads KNSQTNDFGTLSYSDLGAFRY. A helical membrane pass occupies residues 77 to 97; sequence LVHANGICAGYSLLSAIIVAM. Over 98 to 105 the chain is Cytoplasmic; that stretch reads PRPSTMSR. The chain crosses the membrane as a helical span at residues 106–126; it reads AWTFFFLDQVLTYVILAAAAV. Over 127 to 156 the chain is Extracellular; sequence SVEALYLARKGDIAITWSAACVSFGGFCHK. Residues 157 to 177 form a helical membrane-spanning segment; it reads AITSAVITFIVVVCYALLSLV. Topologically, residues 178–205 are cytoplasmic; that stretch reads SSYKLFSRYGAPDVSYPGKGIEVAAFHS.

Belongs to the Casparian strip membrane proteins (CASP) family. As to quaternary structure, homodimer and heterodimers.

It is found in the cell membrane. The protein is CASP-like protein 2A1 of Ricinus communis (Castor bean).